The chain runs to 121 residues: Protein PilH (121 aa).

A Response regulatory domain is found at 3–119; it reads RILIVDDSPT…TLLKTINAVL (117 aa). Asp-52 carries the post-translational modification 4-aspartylphosphate.

Its function is as follows. May be a part of a signal-transduction system that regulates twitching motility by controlling pilus function (extension and retraction). This Pseudomonas aeruginosa (strain ATCC 15692 / DSM 22644 / CIP 104116 / JCM 14847 / LMG 12228 / 1C / PRS 101 / PAO1) protein is Protein PilH (pilH).